Here is a 218-residue protein sequence, read N- to C-terminus: Sodium channel regulatory subunit beta-1 (218 aa).

The N-terminal stretch at 1-18 (MGTLLAFVVGAALVSSAW) is a signal peptide. Residues 19 to 157 (GGCVEVDSET…DKANRDMASI (139 aa)) lie on the Extracellular side of the membrane. 2 disulfide bridges follow: Cys-21-Cys-43 and Cys-40-Cys-121. The region spanning 22–150 (VEVDSETEAV…KIHLEVVDKA (129 aa)) is the Ig-like C2-type domain. N-linked (GlcNAc...) asparagine glycans are attached at residues Asn-93, Asn-110, Asn-114, and Asn-135. The helical transmembrane segment at 158 to 179 (VSEIMMYVLIVVLTIWLVAEMV) threads the bilayer. Topologically, residues 180-218 (YCYKKIAAATEAAAQENASEYLAITSESKENCTGVQVAE) are cytoplasmic.

The protein belongs to the sodium channel auxiliary subunit SCN1B (TC 8.A.17) family. As to quaternary structure, a voltage-gated sodium (Nav) channel consists of an ion-conducting pore-forming alpha subunit functional on its own that is regulated by one or more beta subunits. Interacts with SCN1A; regulatory subunit of SCN1A/Nav1.1. Interacts with SCN3A; regulatory subunit of SCN3A/Nav1.3. Interacts with SCN4A; regulatory subunit of SCN4A/Nav1.4. Interacts with SCN5A; regulatory subunit of SCN5A/Nav1.5. Interacts with SCN8A; regulatory subunit of SCN8A/Nav1.6. Interacts with SCN9A; regulatory subunit of SCN9A/Nav1.7. Interacts with SCN10A; regulatory subunit of SCN10A/Nav1.8. Interacts with NFASC. Interacts with TMEM65.

It localises to the cell membrane. The protein localises to the perikaryon. The protein resides in the cell projection. It is found in the axon. In terms of biological role, regulatory subunit of multiple voltage-gated sodium (Nav) channels directly mediating the depolarization of excitable membranes. Navs, also called VGSCs (voltage-gated sodium channels) or VDSCs (voltage-dependent sodium channels), operate by switching between closed and open conformations depending on the voltage difference across the membrane. In the open conformation they allow Na(+) ions to selectively pass through the pore, along their electrochemical gradient. The influx of Na+ ions provokes membrane depolarization, initiating the propagation of electrical signals throughout cells and tissues. The accessory beta subunits participate in localization and functional modulation of the Nav channels. Modulates the activity of SCN1A/Nav1.1, SCN2A/Nav1.2, SCN3A/Nav1.3, SCN4A/Nav1.4, SCN5A/Nav1.5, SCN8A/Nav1.6, SCN9A/Nav1.7 and SCN10A/Nav1.8. This is Sodium channel regulatory subunit beta-1 from Bos taurus (Bovine).